The following is a 274-amino-acid chain: Thiamine kinase (274 aa).

The protein belongs to the thiamine kinase family.

It catalyses the reaction thiamine + ATP = thiamine phosphate + ADP + H(+). It participates in cofactor biosynthesis; thiamine diphosphate biosynthesis; thiamine phosphate from thiamine: step 1/1. In terms of biological role, catalyzes the ATP-dependent phosphorylation of thiamine to thiamine phosphate. Is involved in thiamine salvage. This is Thiamine kinase from Salmonella gallinarum (strain 287/91 / NCTC 13346).